The sequence spans 209 residues: Thiamine-phosphate synthase (209 aa).

Residues 36-40 (QYRDK) and N68 each bind 4-amino-2-methyl-5-(diphosphooxymethyl)pyrimidine. Mg(2+) is bound by residues D69 and D87. T106 is a 4-amino-2-methyl-5-(diphosphooxymethyl)pyrimidine binding site. Position 133–135 (133–135 (SST)) interacts with 2-[(2R,5Z)-2-carboxy-4-methylthiazol-5(2H)-ylidene]ethyl phosphate. Residue K136 coordinates 4-amino-2-methyl-5-(diphosphooxymethyl)pyrimidine. G163 contacts 2-[(2R,5Z)-2-carboxy-4-methylthiazol-5(2H)-ylidene]ethyl phosphate.

The protein belongs to the thiamine-phosphate synthase family. Requires Mg(2+) as cofactor.

It carries out the reaction 2-[(2R,5Z)-2-carboxy-4-methylthiazol-5(2H)-ylidene]ethyl phosphate + 4-amino-2-methyl-5-(diphosphooxymethyl)pyrimidine + 2 H(+) = thiamine phosphate + CO2 + diphosphate. The enzyme catalyses 2-(2-carboxy-4-methylthiazol-5-yl)ethyl phosphate + 4-amino-2-methyl-5-(diphosphooxymethyl)pyrimidine + 2 H(+) = thiamine phosphate + CO2 + diphosphate. It catalyses the reaction 4-methyl-5-(2-phosphooxyethyl)-thiazole + 4-amino-2-methyl-5-(diphosphooxymethyl)pyrimidine + H(+) = thiamine phosphate + diphosphate. Its pathway is cofactor biosynthesis; thiamine diphosphate biosynthesis; thiamine phosphate from 4-amino-2-methyl-5-diphosphomethylpyrimidine and 4-methyl-5-(2-phosphoethyl)-thiazole: step 1/1. Condenses 4-methyl-5-(beta-hydroxyethyl)thiazole monophosphate (THZ-P) and 2-methyl-4-amino-5-hydroxymethyl pyrimidine pyrophosphate (HMP-PP) to form thiamine monophosphate (TMP). The protein is Thiamine-phosphate synthase of Pseudomonas aeruginosa (strain LESB58).